A 206-amino-acid chain; its full sequence is MFITLEGGEGVGKTTQQALLVERLRQEGYACLCTREPGGTALGKTLRELLLHGDPFSPLAELLLYAADRAEHVSKVIAPALAAGQVVVCDRFTDSTLAYQGYGRGLDLEKIRQLNHLATGGLQPHLTLWLDLPPEVGLARAKARDRLEQERLEFHRRVYQGFQALAAAEPQRIVRISAQGSPAEVAARLWSVVEPRLPLATAGREP.

Residue glycine 7–threonine 14 coordinates ATP.

The protein belongs to the thymidylate kinase family.

The enzyme catalyses dTMP + ATP = dTDP + ADP. Phosphorylation of dTMP to form dTDP in both de novo and salvage pathways of dTTP synthesis. This is Thymidylate kinase from Synechococcus sp. (strain JA-2-3B'a(2-13)) (Cyanobacteria bacterium Yellowstone B-Prime).